A 686-amino-acid polypeptide reads, in one-letter code: Glycine--tRNA ligase beta subunit (686 aa).

This sequence belongs to the class-II aminoacyl-tRNA synthetase family. Tetramer of two alpha and two beta subunits.

It localises to the cytoplasm. The enzyme catalyses tRNA(Gly) + glycine + ATP = glycyl-tRNA(Gly) + AMP + diphosphate. This Geobacter metallireducens (strain ATCC 53774 / DSM 7210 / GS-15) protein is Glycine--tRNA ligase beta subunit.